Reading from the N-terminus, the 714-residue chain is Calpain-1 catalytic subunit (714 aa).

Ser-2 is modified (N-acetylserine). A Calpain catalytic domain is found at 55-354; sequence LFRDEAFPPV…FTRLEICNLT (300 aa). Ca(2+)-binding residues include Gln-109 and Asp-114. Catalysis depends on residues Cys-115, His-272, and Asn-296. Positions 316, 318, and 323 each coordinate Ca(2+). Thr-354 is subject to Phosphothreonine. Residues 355–526 are domain III; it reads PDALKSRTIR…KSAGTVELDD (172 aa). Residues 527 to 542 form a linker region; sequence QIQANLPDEQVLSEEE. EF-hand domains lie at 541-576, 585-618, 615-650, and 680-714; these read EEIDENFKALFRQLAGEDMEISVKELRTILNRIISK, FSLESCRSMVNLMDRDGNGKLGLVEFNILWNRIR, NRIRNYLSIFRKFDLDKSGSMSAYEMRMAIESAGFK, and VRLETMFRFFKTLDTDLDGVVTFDLFKWLQLTMFA. Positions 543–713 are domain IV; the sequence is IDENFKALFR…LFKWLQLTMF (171 aa). Ca(2+) is bound by residues Asp-598, Asp-600, Asn-602, Lys-604, Glu-609, Asp-628, Asp-630, Ser-632, Ser-634, and Glu-639.

Belongs to the peptidase C2 family. In terms of assembly, forms a heterodimer with a small (regulatory) subunit CAPNS1. It depends on Ca(2+) as a cofactor. In terms of processing, undergoes calcium-induced successive autoproteolytic cleavages that generate a membrane-bound 78 kDa active form and an intracellular 75 kDa active form. Calpastatin reduces with high efficiency the transition from 78 kDa to 75 kDa calpain forms. As to expression, ubiquitous.

It is found in the cytoplasm. The protein localises to the cell membrane. The enzyme catalyses Broad endopeptidase specificity.. Its activity is regulated as follows. Activated by micromolar concentrations of calcium and inhibited by calpastatin. Calcium-regulated non-lysosomal thiol-protease which catalyzes limited proteolysis of substrates involved in cytoskeletal remodeling and signal transduction. Proteolytically cleaves CTBP1 at 'Asn-375', 'Gly-387' and 'His-409'. Cleaves and activates caspase-7 (CASP7). This Homo sapiens (Human) protein is Calpain-1 catalytic subunit.